Consider the following 73-residue polypeptide: Hypotensin-like peptide (73 aa).

Residues Met1 to Gly25 form the signal peptide.

As to expression, expressed by the venom gland.

The protein localises to the secreted. In terms of biological role, may potentiate the hypotensive effect of bradykinin. The polypeptide is Hypotensin-like peptide (Tityus serrulatus (Brazilian scorpion)).